Reading from the N-terminus, the 346-residue chain is Probable RNA methyltransferase PA14_40730 (346 aa).

Glu91 functions as the Proton acceptor in the catalytic mechanism. One can recognise a Radical SAM core domain in the interval 94–320 (LLPRGGLCVS…TKVRNSAGQD (227 aa)). Cysteines 101 and 325 form a disulfide. Residues Cys108, Cys112, and Cys115 each coordinate [4Fe-4S] cluster. S-adenosyl-L-methionine is bound by residues 153 to 154 (GE), Ser183, 206 to 208 (SLH), and Asn282. Residue Cys325 is the S-methylcysteine intermediate of the active site.

The protein belongs to the radical SAM superfamily. RlmN family. Requires [4Fe-4S] cluster as cofactor.

The protein localises to the cytoplasm. This is Probable RNA methyltransferase PA14_40730 from Pseudomonas aeruginosa (strain UCBPP-PA14).